We begin with the raw amino-acid sequence, 226 residues long: N-(5'-phosphoribosyl)anthranilate isomerase (226 aa).

It belongs to the TrpF family.

It catalyses the reaction N-(5-phospho-beta-D-ribosyl)anthranilate = 1-(2-carboxyphenylamino)-1-deoxy-D-ribulose 5-phosphate. Its pathway is amino-acid biosynthesis; L-tryptophan biosynthesis; L-tryptophan from chorismate: step 3/5. The chain is N-(5'-phosphoribosyl)anthranilate isomerase (trpF) from Methanocaldococcus jannaschii (strain ATCC 43067 / DSM 2661 / JAL-1 / JCM 10045 / NBRC 100440) (Methanococcus jannaschii).